Reading from the N-terminus, the 1061-residue chain is E3 SUMO-protein ligase ZNF451 (1061 aa).

Residues methionine 1–proline 38 are disordered. The tract at residues methionine 1 to leucine 246 is sufficient for E3 SUMO-protein ligase activity. Positions methionine 1 to valine 344 are important for interaction with SUMO1 and SUMO2. The tract at residues aspartate 30 to glycine 37 is interaction with SUMO2 1. The PLRP signature appears at proline 38 to proline 41. The interaction with SUMO2 2 stretch occupies residues valine 42–serine 50. Glycyl lysine isopeptide (Lys-Gly) (interchain with G-Cter in SUMO2) cross-links involve residues lysine 75, lysine 77, lysine 106, isoleucine 121, alanine 130, leucine 138, lysine 139, lysine 144, and lysine 153. A Phosphoserine modification is found at serine 155. Arginine 158 is modified (omega-N-methylarginine). Glycyl lysine isopeptide (Lys-Gly) (interchain with G-Cter in SUMO2) cross-links involve residues valine 164 and lysine 167. Residues proline 168–histidine 525 are important for interaction with SMAD4. The segment at isoleucine 169–histidine 195 adopts a C2H2-type 1 zinc-finger fold. Glycyl lysine isopeptide (Lys-Gly) (interchain with G-Cter in SUMO2) cross-links involve residues glutamine 226, glycine 240, proline 247, serine 263, lysine 270, lysine 275, lysine 283, aspartate 286, lysine 288, proline 293, lysine 301, and lysine 309. A C2H2-type 2 zinc finger spans residues phenylalanine 253–histidine 277. The C2H2-type 3 zinc finger occupies valine 315 to histidine 337. Residue lysine 357 forms a Glycyl lysine isopeptide (Lys-Gly) (interchain with G-Cter in SUMO2) linkage. The segment at glycine 362–histidine 386 adopts a C2H2-type 4 zinc-finger fold. Lysine 423 participates in a covalent cross-link: Glycyl lysine isopeptide (Lys-Gly) (interchain with G-Cter in SUMO2). Serine 432 is modified (phosphoserine). Glycyl lysine isopeptide (Lys-Gly) (interchain with G-Cter in SUMO2) cross-links involve residues lysine 434, lysine 446, lysine 452, lysine 454, lysine 464, phenylalanine 473, valine 490, cysteine 500, lysine 505, aspartate 508, glycine 522, tryptophan 532, lysine 543, and lysine 585. The C2H2-type 5 zinc finger occupies tyrosine 498–histidine 521. A C2H2-type 6 zinc finger spans residues phenylalanine 531–histidine 554. Residues tryptophan 606–histidine 631 form a C2H2-type 7; atypical zinc finger. Glycyl lysine isopeptide (Lys-Gly) (interchain with G-Cter in SUMO2) cross-links involve residues lysine 632, lysine 647, and lysine 664. The segment at tyrosine 636–histidine 659 adopts a C2H2-type 8 zinc-finger fold. The C2H2-type 9 zinc finger occupies tyrosine 667–histidine 690. Lysine 706 participates in a covalent cross-link: Glycyl lysine isopeptide (Lys-Gly) (interchain with G-Cter in SUMO1); alternate. Lysine 706 is covalently cross-linked (Glycyl lysine isopeptide (Lys-Gly) (interchain with G-Cter in SUMO2); alternate). Residues lysine 731 and lysine 748 each participate in a glycyl lysine isopeptide (Lys-Gly) (interchain with G-Cter in SUMO2) cross-link. The C2H2-type 10 zinc-finger motif lies at phenylalanine 753 to histidine 776. Glycyl lysine isopeptide (Lys-Gly) (interchain with G-Cter in SUMO2) cross-links involve residues lysine 777, lysine 779, lysine 790, lysine 817, lysine 827, lysine 832, lysine 843, lysine 845, lysine 852, lysine 951, lysine 992, and lysine 993. The segment at isoleucine 789 to histidine 812 adopts a C2H2-type 11 zinc-finger fold. Positions leucine 1050 to methionine 1061 are important for ubiquitin binding.

This sequence belongs to the krueppel C2H2-type zinc-finger protein family. As to quaternary structure, homooligomer. Interacts (via N-terminal region) with SUMO1. Interacts (via N-terminal region) with SUMO2. Interacts simultaneously with two SUMO2 chains. Identified in a complex with SUMO2 and UBE2I/UBC9, where one ZNF451 interacts with one UBE2I/UBC9 and two SUMO2 chains, one bound to the UBE2I/UBC9 active site and the other to another region of the same UBE2I/UBC9 molecule. Interacts (via C-terminus) with ubiquitin. Interacts (via N-terminal zinc-finger domains) with SMAD4 (via MH2 domain). Interacts with SMAD2 and SMAD3. Identified in a complex that contains at least ZNF451, SMAD2, SMAD3 and SMAD4. Interacts with EP300. Inhibits interaction between EP300 and the SMAD4 complex. Interacts with SIMC1. Sumoylated. Predominantly sumoylated on the N-terminal region that is important for interaction with SUMO1 and SUMO2. Sumoylation is important for localization in nuclear granules; desumoylation leads to diffuse nucleoplasmic location. Autosumoylated (in vitro). Sumoylation enhances E3 SUMO-protein ligase activity.

It is found in the nucleus. The protein resides in the PML body. It localises to the nucleoplasm. The protein operates within protein modification; protein sumoylation. Its function is as follows. E3 SUMO-protein ligase; has a preference for SUMO2 and SUMO3 and facilitates UBE2I/UBC9-mediated sumoylation of target proteins. Plays a role in protein SUMO2 modification in response to stress caused by DNA damage and by proteasome inhibitors (in vitro). Required for MCM4 sumoylation. Has no activity with SUMO1. Preferentially transfers an additional SUMO2 chain onto the SUMO2 consensus site 'Lys-11'. Negatively regulates transcriptional activation mediated by the SMAD4 complex in response to TGF-beta signaling. Inhibits EP300-mediated acetylation of histone H3 at 'Lys-9'. Plays a role in regulating the transcription of AR targets. The chain is E3 SUMO-protein ligase ZNF451 (ZNF451) from Homo sapiens (Human).